We begin with the raw amino-acid sequence, 365 residues long: Protein RecA (365 aa).

Glycine 73–threonine 80 is a binding site for ATP.

This sequence belongs to the RecA family.

It localises to the cytoplasm. Can catalyze the hydrolysis of ATP in the presence of single-stranded DNA, the ATP-dependent uptake of single-stranded DNA by duplex DNA, and the ATP-dependent hybridization of homologous single-stranded DNAs. It interacts with LexA causing its activation and leading to its autocatalytic cleavage. This is Protein RecA from Prochlorococcus marinus (strain AS9601).